The primary structure comprises 330 residues: tRNA (guanine(37)-N(1))-methyltransferase Trm5b (330 aa).

Residues Arg-173, 211 to 212, 238 to 239, and Asn-252 contribute to the S-adenosyl-L-methionine site; these read DI and DS.

Belongs to the class I-like SAM-binding methyltransferase superfamily. TRM5/TYW2 family.

The protein resides in the cytoplasm. It catalyses the reaction guanosine(37) in tRNA + S-adenosyl-L-methionine = N(1)-methylguanosine(37) in tRNA + S-adenosyl-L-homocysteine + H(+). Its function is as follows. Specifically methylates the N1 position of guanosine-37 in various tRNAs. The polypeptide is tRNA (guanine(37)-N(1))-methyltransferase Trm5b (Pyrococcus abyssi (strain GE5 / Orsay)).